The chain runs to 451 residues: Bifunctional protein GlmU (451 aa).

The pyrophosphorylase stretch occupies residues 1 to 225 (MLEIIILAAG…EYEVLGVNNR (225 aa)). Residues 7–10 (LAAG), K21, Q72, 77–78 (GT), 99–101 (YGD), G136, E150, N165, and N223 each bind UDP-N-acetyl-alpha-D-glucosamine. D101 lines the Mg(2+) pocket. N223 lines the Mg(2+) pocket. Residues 226-246 (LQQAELERIFQRQVAEELMVA) form a linker region. The N-acetyltransferase stretch occupies residues 247-451 (GATLLDPARL…IKGWARPVKK (205 aa)). Residues R329 and K347 each coordinate UDP-N-acetyl-alpha-D-glucosamine. The Proton acceptor role is filled by H359. 2 residues coordinate UDP-N-acetyl-alpha-D-glucosamine: Y362 and N373. Residues A376, 382–383 (NY), S401, A419, and R436 contribute to the acetyl-CoA site.

In the N-terminal section; belongs to the N-acetylglucosamine-1-phosphate uridyltransferase family. This sequence in the C-terminal section; belongs to the transferase hexapeptide repeat family. In terms of assembly, homotrimer. Mg(2+) serves as cofactor.

The protein resides in the cytoplasm. The enzyme catalyses alpha-D-glucosamine 1-phosphate + acetyl-CoA = N-acetyl-alpha-D-glucosamine 1-phosphate + CoA + H(+). It carries out the reaction N-acetyl-alpha-D-glucosamine 1-phosphate + UTP + H(+) = UDP-N-acetyl-alpha-D-glucosamine + diphosphate. It functions in the pathway nucleotide-sugar biosynthesis; UDP-N-acetyl-alpha-D-glucosamine biosynthesis; N-acetyl-alpha-D-glucosamine 1-phosphate from alpha-D-glucosamine 6-phosphate (route II): step 2/2. Its pathway is nucleotide-sugar biosynthesis; UDP-N-acetyl-alpha-D-glucosamine biosynthesis; UDP-N-acetyl-alpha-D-glucosamine from N-acetyl-alpha-D-glucosamine 1-phosphate: step 1/1. The protein operates within bacterial outer membrane biogenesis; LPS lipid A biosynthesis. Functionally, catalyzes the last two sequential reactions in the de novo biosynthetic pathway for UDP-N-acetylglucosamine (UDP-GlcNAc). The C-terminal domain catalyzes the transfer of acetyl group from acetyl coenzyme A to glucosamine-1-phosphate (GlcN-1-P) to produce N-acetylglucosamine-1-phosphate (GlcNAc-1-P), which is converted into UDP-GlcNAc by the transfer of uridine 5-monophosphate (from uridine 5-triphosphate), a reaction catalyzed by the N-terminal domain. The polypeptide is Bifunctional protein GlmU (Saccharophagus degradans (strain 2-40 / ATCC 43961 / DSM 17024)).